We begin with the raw amino-acid sequence, 348 residues long: Phosphoribosylformylglycinamidine cyclo-ligase (348 aa).

The protein belongs to the AIR synthase family.

It localises to the cytoplasm. The catalysed reaction is 2-formamido-N(1)-(5-O-phospho-beta-D-ribosyl)acetamidine + ATP = 5-amino-1-(5-phospho-beta-D-ribosyl)imidazole + ADP + phosphate + H(+). It participates in purine metabolism; IMP biosynthesis via de novo pathway; 5-amino-1-(5-phospho-D-ribosyl)imidazole from N(2)-formyl-N(1)-(5-phospho-D-ribosyl)glycinamide: step 2/2. The protein is Phosphoribosylformylglycinamidine cyclo-ligase of Ruegeria pomeroyi (strain ATCC 700808 / DSM 15171 / DSS-3) (Silicibacter pomeroyi).